Here is a 440-residue protein sequence, read N- to C-terminus: MKMAGWKKKLCPGHHLWALGCYMLLAVVSLRLSLRFKCDVDSLDLESRDFQSQHCRDMLYNSLKLPAKRSINCSGITRGDQEAVVQALLDNLEVKKKRPPLTDTYYLNITRDCERFKAQRKFIQFPLSKEELDFPIAYSMVVHEKIENFERLLRAVYAPQNIYCVHVDVKSPETFKEAVKAIISCFPNVFMASKLVPVVYASWSRVQADLNCMEDLLQSSVSWKYLLNTCGTDFPIKTNAEMVLALKMLKGKNSMESEVPSESKKNRWKYRYEVTDTLYPTSKIKDPPPDNLPMFTGNAYFVASRAFVQHVLDNPKSQILVEWVKDTYSPDEHLWATLQRAPWMPGSVPSHPKYHISDMTAIARLVKWQYHEGDVSMGAPYAPCSGIHRRAICIYGAGDLYWILQNHHLLANKFDPRVDDNVLQCLEEYLRHKAIYGTEL.

Residues 1 to 9 (MKMAGWKKK) are Cytoplasmic-facing. A helical; Signal-anchor for type II membrane protein transmembrane segment spans residues 10 to 30 (LCPGHHLWALGCYMLLAVVSL). Residues 31-440 (RLSLRFKCDV…RHKAIYGTEL (410 aa)) lie on the Lumenal side of the membrane. N-linked (GlcNAc...) asparagine; by host glycans are attached at residues Asn72 and Asn108. 4 disulfide bridges follow: Cys73/Cys230, Cys164/Cys384, Cys185/Cys212, and Cys393/Cys425.

It belongs to the glycosyltransferase 14 family.

It localises to the host Golgi apparatus membrane. It catalyses the reaction a 3-O-[beta-D-galactosyl-(1-&gt;3)-N-acetyl-alpha-D-galactosaminyl]-L-seryl-[protein] + UDP-N-acetyl-alpha-D-glucosamine = 3-O-{beta-D-galactosyl-(1-&gt;3)-[N-acetyl-beta-D-glucosaminyl-(1-&gt;6)]-N-acetyl-alpha-D-galactosaminyl}-L-seryl-[protein] + UDP + H(+). The catalysed reaction is a 3-O-[beta-D-galactosyl-(1-&gt;3)-N-acetyl-alpha-D-galactosaminyl]-L-threonyl-[protein] + UDP-N-acetyl-alpha-D-glucosamine = a 3-O-{beta-D-galactosyl-(1-&gt;3)-[N-acetyl-beta-D-glucosaminyl-(1-&gt;6)]-N-acetyl-alpha-D-galactosaminyl}-L-threonyl-[protein] + UDP + H(+). It carries out the reaction a beta-D-Gal-(1-&gt;4)-beta-D-GlcNAc-(1-&gt;3)-beta-D-Gal-(1-&gt;4)-beta-D-GlcNAc derivative + UDP-N-acetyl-alpha-D-glucosamine = a beta-D-Gal-(1-&gt;4)-beta-D-GlcNAc-(1-&gt;3)-[beta-D-GlcNAc-(1-&gt;6)]-beta-D-Gal-(1-&gt;4)-N-acetyl-beta-D-glucosaminyl derivative + UDP + H(+). The enzyme catalyses 3-O-[N-acetyl-beta-D-glucosaminyl-(1-&gt;3)-N-acetyl-alpha-D-galactosaminyl]-L-seryl-[protein] + UDP-N-acetyl-alpha-D-glucosamine = 3-O-[N-acetyl-beta-D-glucosaminyl-(1-&gt;3)-[N-acetyl-beta-D-glucosaminyl-(1-&gt;6)]-N-acetyl-alpha-D-galactosaminyl]-L-seryl-[protein] + UDP + H(+). It catalyses the reaction a 3-O-[N-acetyl-beta-D-glucosaminyl-(1-&gt;3)-N-acetyl-alpha-D-galactosaminyl]-L-threonyl-[protein] + UDP-N-acetyl-alpha-D-glucosamine = 3-O-[N-acetyl-beta-D-glucosaminyl-(1-&gt;3)-[N-acetyl-beta-D-glucosaminyl-(1-&gt;6)]-N-acetyl-alpha-D-galactosaminyl]-L-threonyl-[protein] + UDP + H(+). It functions in the pathway protein modification; protein glycosylation. Its function is as follows. Non-essential glycosyltransferase that can synthesize all known mucin beta 6 N-acetylglucosaminides. Mediates core 2 and core 4 O-glycan branching, 2 important steps in mucin-type biosynthesis. Has also I-branching enzyme activity by converting linear into branched poly-N-acetyllactosaminoglycans. Contributes to the post-translational modifications of structural proteins. The sequence is that of Beta-1,3-galactosyl-O-glycosyl-glycoprotein beta-1,6-N-acetylglucosaminyltransferase (Bo17) from Bovine herpesvirus 4 (strain V. test) (BoHV-4).